The primary structure comprises 406 residues: Cytochrome P450 165C4 (406 aa).

C356 serves as a coordination point for heme.

The protein belongs to the cytochrome P450 family. It depends on heme as a cofactor.

Its pathway is antibiotic biosynthesis; vancomycin biosynthesis. Its function is as follows. Involved in the coupling of aromatic side chains of the heptapeptide of vancomycin. This is Cytochrome P450 165C4 (cyp165C4) from Amycolatopsis orientalis (Nocardia orientalis).